The following is a 444-amino-acid chain: Phosphoglucosamine mutase (444 aa).

Serine 102 functions as the Phosphoserine intermediate in the catalytic mechanism. Positions 102, 241, 243, and 245 each coordinate Mg(2+). Serine 102 carries the phosphoserine modification.

The protein belongs to the phosphohexose mutase family. Requires Mg(2+) as cofactor. Post-translationally, activated by phosphorylation.

It catalyses the reaction alpha-D-glucosamine 1-phosphate = D-glucosamine 6-phosphate. Its function is as follows. Catalyzes the conversion of glucosamine-6-phosphate to glucosamine-1-phosphate. The protein is Phosphoglucosamine mutase of Actinobacillus succinogenes (strain ATCC 55618 / DSM 22257 / CCUG 43843 / 130Z).